We begin with the raw amino-acid sequence, 195 residues long: UMP-CMP kinase (195 aa).

17-22 (GSGKGT) lines the ATP pocket. The interval 37 to 66 (SAGDLLRQEQQSGSKDGEMIATMIKNGEIV) is NMP. Residues R43, 64 to 66 (EIV), and 91 to 94 (GFPR) contribute to the a ribonucleoside 5'-phosphate site. N98 provides a ligand contact to CMP. The tract at residues 131-141 (KRGESSGRSDD) is LID. R132 contributes to the ATP binding site. Residues R138 and R149 each coordinate a ribonucleoside 5'-phosphate. Position 177 (R177) interacts with ATP.

It belongs to the adenylate kinase family. UMP-CMP kinase subfamily. In terms of assembly, monomer. Mg(2+) is required as a cofactor.

Its subcellular location is the cytoplasm. It localises to the nucleus. The catalysed reaction is CMP + ATP = CDP + ADP. It carries out the reaction dCMP + ATP = dCDP + ADP. The enzyme catalyses UMP + ATP = UDP + ADP. Its function is as follows. Catalyzes the phosphorylation of pyrimidine nucleoside monophosphates at the expense of ATP. Plays an important role in de novo pyrimidine nucleotide biosynthesis. Has preference for UMP and CMP as phosphate acceptors. The chain is UMP-CMP kinase from Dictyostelium discoideum (Social amoeba).